A 551-amino-acid polypeptide reads, in one-letter code: MASKILVNIKEEVTCPICLELLTEPLSLDCGHSFCQACITANHKESRERSCPLCRVSYHSENLRPNRHLANIAERLREVMLSPEEGQKVDRCARHGEKLLLFCQQHGNVICWLCERSEEHRGHRTSLVEEVAQKYREKLQAALEMMRQKEQDAEMLEADVREEQASWKIQIENDKTSTLAEFKQLRDILDCEESNELQKLEKEEENLLKRLVQSENDMVLQTQSIRVLIADLERRLQGSVMELLQGVEGVIKRIKNVTLQKPETFLNEKRRVFQAPDLKGMLQVFKELKEVQCYWAHVTLIPNHPSCTVISEDKREVRYQEQIHHHPSMEVKYFYGILGSPSITSGKHYWEVDVSNKSAWILGVCVSLKCIGNFPGIENYQPQNGYWVIGLRNADNYSAFQDAVPETENYQPKNRNRFTGLQNADNCSAFQNAFPGIQSYQPKKSHLFTGLQNLSNYNAFQNKVQYNYIDFQDDSLSTPSAPLIVPLFMTICPKRVGVFLDYEACTVSFFNVTSNGYLIYKFSNCQFSYPVFPYFSPMTCELPMTLCSPSS.

Residue alanine 2 is modified to N-acetylalanine. The RING-type zinc-finger motif lies at 15–55; sequence CPICLELLTEPLSLDCGHSFCQACITANHKESRERSCPLCR. Serine 82 bears the Phosphoserine mark. A B box-type zinc finger spans residues 87-128; the sequence is QKVDRCARHGEKLLLFCQQHGNVICWLCERSEEHRGHRTSLV. Cysteine 92, histidine 95, cysteine 114, and histidine 120 together coordinate Zn(2+). The stretch at 127–221 forms a coiled coil; sequence LVEEVAQKYR…VQSENDMVLQ (95 aa). Positions 182–195 are required for interaction with GABARAP and for autophagy; that stretch reads FKQLRDILDCEESN. One can recognise a B30.2/SPRY domain in the interval 276–551; sequence PDLKGMLQVF…LPMTLCSPSS (276 aa).

It belongs to the TRIM/RBCC family. Can form homodimers and homotrimers. In addition to lower-order dimerization, also exhibits a higher-order multimerization and both low- and high-order multimerizations are essential for its restriction activity. Interacts with BTBD1 and BTBD2. Interacts with PSMC4, PSMC5, PSMD7 and HSPA8/HSC70. Interacts (via B30.2/SPRY domain) with HSPA1A/B. Interacts with PSMC2, MAP3K7/TAK1, TAB2 and TAB3. Interacts with SQSTM1. Interacts with TRIM6 and TRIM34. Interacts with ULK1 (phosphorylated form), GABARAP, GABARAPL1, GABARAPL2, MAP1LC3A, MAP1LC3C and BECN1. Degraded in a proteasome-independent fashion in the absence of viral infection but in a proteasome-dependent fashion following exposure to restriction sensitive virus. Post-translationally, autoubiquitinated in a RING finger- and UBE2D2-dependent manner. Monoubiquitinated by TRIM21. Deubiquitinated by Yersinia YopJ. Ubiquitination may not lead to proteasomal degradation.

It is found in the cytoplasm. The protein resides in the nucleus. The enzyme catalyses S-ubiquitinyl-[E2 ubiquitin-conjugating enzyme]-L-cysteine + [acceptor protein]-L-lysine = [E2 ubiquitin-conjugating enzyme]-L-cysteine + N(6)-ubiquitinyl-[acceptor protein]-L-lysine.. The protein operates within protein modification; protein ubiquitination. Functionally, capsid-specific restriction factor that prevents infection from non-host-adapted retroviruses. Blocks viral replication early in the life cycle, after viral entry but before reverse transcription. In addition to acting as a capsid-specific restriction factor, also acts as a pattern recognition receptor that activates innate immune signaling in response to the retroviral capsid lattice. Binding to the viral capsid triggers its E3 ubiquitin ligase activity, and in concert with the heterodimeric ubiquitin conjugating enzyme complex UBE2V1-UBE2N (also known as UBC13-UEV1A complex) generates 'Lys-63'-linked polyubiquitin chains, which in turn are catalysts in the autophosphorylation of the MAP3K7/TAK1 complex (includes TAK1, TAB2, and TAB3). Activation of the MAP3K7/TAK1 complex by autophosphorylation results in the induction and expression of NF-kappa-B and MAPK-responsive inflammatory genes, thereby leading to an innate immune response in the infected cell. Plays a role in regulating autophagy through activation of autophagy regulator BECN1 by causing its dissociation from its inhibitors BCL2 and TAB2. The chain is Tripartite motif-containing protein 5 (TRIM5) from Alouatta sara (Bolivian red howler monkey).